Here is a 302-residue protein sequence, read N- to C-terminus: GTP cyclohydrolase FolE2 (302 aa).

The segment at 1-27 (MPKKQLPPKEERHKLFGSVPPKERTKP) is disordered.

It belongs to the GTP cyclohydrolase IV family.

It carries out the reaction GTP + H2O = 7,8-dihydroneopterin 3'-triphosphate + formate + H(+). The protein operates within cofactor biosynthesis; 7,8-dihydroneopterin triphosphate biosynthesis; 7,8-dihydroneopterin triphosphate from GTP: step 1/1. Converts GTP to 7,8-dihydroneopterin triphosphate. The protein is GTP cyclohydrolase FolE2 of Oceanobacillus iheyensis (strain DSM 14371 / CIP 107618 / JCM 11309 / KCTC 3954 / HTE831).